Here is a 245-residue protein sequence, read N- to C-terminus: tRNA pseudouridine synthase A (245 aa).

Residue D52 is the Nucleophile of the active site. Y111 provides a ligand contact to substrate.

It belongs to the tRNA pseudouridine synthase TruA family. As to quaternary structure, homodimer.

The enzyme catalyses uridine(38/39/40) in tRNA = pseudouridine(38/39/40) in tRNA. Its function is as follows. Formation of pseudouridine at positions 38, 39 and 40 in the anticodon stem and loop of transfer RNAs. The sequence is that of tRNA pseudouridine synthase A from Rhodopseudomonas palustris (strain BisB5).